The primary structure comprises 278 residues: Shikimate dehydrogenase (NADP(+)) (278 aa).

Shikimate is bound by residues 19–21 (SFS) and threonine 66. Lysine 70 functions as the Proton acceptor in the catalytic mechanism. Residues asparagine 91 and aspartate 106 each contribute to the shikimate site. Residues 130–134 (GSGGA) and leucine 222 contribute to the NADP(+) site. Residue tyrosine 224 coordinates shikimate. An NADP(+)-binding site is contributed by glycine 245.

This sequence belongs to the shikimate dehydrogenase family. In terms of assembly, homodimer.

The catalysed reaction is shikimate + NADP(+) = 3-dehydroshikimate + NADPH + H(+). It functions in the pathway metabolic intermediate biosynthesis; chorismate biosynthesis; chorismate from D-erythrose 4-phosphate and phosphoenolpyruvate: step 4/7. In terms of biological role, involved in the biosynthesis of the chorismate, which leads to the biosynthesis of aromatic amino acids. Catalyzes the reversible NADPH linked reduction of 3-dehydroshikimate (DHSA) to yield shikimate (SA). In Methanococcus maripaludis (strain DSM 14266 / JCM 13030 / NBRC 101832 / S2 / LL), this protein is Shikimate dehydrogenase (NADP(+)).